Here is a 375-residue protein sequence, read N- to C-terminus: Succinyl-diaminopimelate desuccinylase (375 aa).

Zn(2+) is bound at residue H66. D68 is an active-site residue. D99 contacts Zn(2+). E133 acts as the Proton acceptor in catalysis. Residues E134, E162, and H348 each coordinate Zn(2+).

This sequence belongs to the peptidase M20A family. DapE subfamily. As to quaternary structure, homodimer. Zn(2+) is required as a cofactor. It depends on Co(2+) as a cofactor.

It carries out the reaction N-succinyl-(2S,6S)-2,6-diaminopimelate + H2O = (2S,6S)-2,6-diaminopimelate + succinate. It participates in amino-acid biosynthesis; L-lysine biosynthesis via DAP pathway; LL-2,6-diaminopimelate from (S)-tetrahydrodipicolinate (succinylase route): step 3/3. Functionally, catalyzes the hydrolysis of N-succinyl-L,L-diaminopimelic acid (SDAP), forming succinate and LL-2,6-diaminopimelate (DAP), an intermediate involved in the bacterial biosynthesis of lysine and meso-diaminopimelic acid, an essential component of bacterial cell walls. The protein is Succinyl-diaminopimelate desuccinylase of Escherichia coli O1:K1 / APEC.